We begin with the raw amino-acid sequence, 524 residues long: MASVGLQFQASAGDADPQSRPLLLLGQLQHLHRVPWSHVRGKLQPRVTEELWQAALATLNPNPTDSCPLYLNCATVAALPSRVSRHNSPSAAHFITRLVRTCLPPGTHRCILMVCEQTEVFASACALARAFPLFTHRSGASRRAEKRTVMVEFFLVGQDNGPVEVSTLQCLTNATEGVRLAARIVDTPCNEMNTDIFLEEIIQVGKELGITPTIIRDEQLKTKGFGGIYGVGKAALHPPALAILSHTPDGATQTIAWVGKGIVYDTGGLSIKGKTTMPGMKRDCGGAAAVLGAFRAAIKQGFKDNLHAVFCLAENAVGPNATRPDDIHLLYSGKTVEINNTDAEGRLVLADGVSYACKDLGADIIVDMATLTGAQGIATGKYHAAVLTNSAEWEAACVKAGRKCGDLVHPLVYCPELHFSEFTSAVADMKNSVADRDNSPSSCAGLFIASHIGFDWPGVWVHLDIAAPVHAGERATGFGVALLLALFGRASEDPLLNLVSPLDCEVDAQEGDNMGRDSKRRRLV.

Residues lysine 260 and aspartate 265 each coordinate Zn(2+). Residue lysine 272 is part of the active site. Residues aspartate 283, aspartate 342, and glutamate 344 each coordinate Zn(2+). Arginine 346 is an active-site residue.

The protein belongs to the peptidase M17 family. Zn(2+) is required as a cofactor. It depends on Mn(2+) as a cofactor.

In terms of biological role, probably catalyzes the removal of unsubstituted N-terminal amino acids from various peptides. The protein is Probable aminopeptidase NPEPL1 (Npepl1) of Mus musculus (Mouse).